We begin with the raw amino-acid sequence, 543 residues long: Type I restriction enzyme MpnII methylase subunit (543 aa).

Residues 208 to 213, 240 to 242, and glutamate 265 contribute to the S-adenosyl-L-methionine site; these read EFFTPQ and SGS.

This sequence belongs to the N(4)/N(6)-methyltransferase family. In terms of assembly, the methyltransferase is composed of M and S polypeptides.

The catalysed reaction is a 2'-deoxyadenosine in DNA + S-adenosyl-L-methionine = an N(6)-methyl-2'-deoxyadenosine in DNA + S-adenosyl-L-homocysteine + H(+). In terms of biological role, the subtype gamma methyltransferase (M) subunit of a type I restriction enzyme. The M and S subunits together form a methyltransferase (MTase) that probably methylates A-2 on the top strand and A-3 on the bottom strand of the sequence 5'-GAN(7)TAY-3'. As the bacterial DNA is methylated on this sequence and this is the only type I methylase in the genome, it is probably responsible for all of the methylation on this site in the genome. The R subunit has multiple frameshifts and is probably not expressed in this bacteria. The protein is Type I restriction enzyme MpnII methylase subunit of Mycoplasma pneumoniae (strain ATCC 29342 / M129 / Subtype 1) (Mycoplasmoides pneumoniae).